The following is a 673-amino-acid chain: UvrABC system protein B (673 aa).

The region spanning Ala-26 to Arg-414 is the Helicase ATP-binding domain. Position 39-46 (Gly-39–Thr-46) interacts with ATP. Residues Tyr-92–Ile-115 carry the Beta-hairpin motif. Positions Gln-431 to Met-597 constitute a Helicase C-terminal domain. 2 stretches are compositionally biased toward basic and acidic residues: residues Ala-600–Ser-609 and His-618–Ala-628. The disordered stretch occupies residues Ala-600–Ala-628. Residues Ala-635 to Ala-670 form the UVR domain.

It belongs to the UvrB family. As to quaternary structure, forms a heterotetramer with UvrA during the search for lesions. Interacts with UvrC in an incision complex.

Its subcellular location is the cytoplasm. In terms of biological role, the UvrABC repair system catalyzes the recognition and processing of DNA lesions. A damage recognition complex composed of 2 UvrA and 2 UvrB subunits scans DNA for abnormalities. Upon binding of the UvrA(2)B(2) complex to a putative damaged site, the DNA wraps around one UvrB monomer. DNA wrap is dependent on ATP binding by UvrB and probably causes local melting of the DNA helix, facilitating insertion of UvrB beta-hairpin between the DNA strands. Then UvrB probes one DNA strand for the presence of a lesion. If a lesion is found the UvrA subunits dissociate and the UvrB-DNA preincision complex is formed. This complex is subsequently bound by UvrC and the second UvrB is released. If no lesion is found, the DNA wraps around the other UvrB subunit that will check the other stand for damage. This chain is UvrABC system protein B, found in Xanthomonas axonopodis pv. citri (strain 306).